The chain runs to 748 residues: Meprin A subunit alpha (748 aa).

Residues 1 to 20 form the signal peptide; sequence MLWTLPVCLLSLSFSAHIAA. Residues 21–66 constitute a propeptide that is removed on maturation; sequence VSIQHLSTGHDHDDVDVGEQQKDISEINSAAGLNLFQGDILLPRTR. The Peptidase M12A domain occupies 67–261; sequence NALRDPSSRW…TRLNRMYNCT (195 aa). The Extracellular portion of the chain corresponds to 67–719; sequence NALRDPSSRW…RCQAMHVHGS (653 aa). Disulfide bonds link C108-C260, C129-C148, and C270-C432. N141 carries N-linked (GlcNAc...) asparagine glycosylation. Position 156 (H156) interacts with Zn(2+). Residue E157 is part of the active site. Zn(2+) is bound by residues H160 and H166. N223, N259, N319, N441, and N542 each carry an N-linked (GlcNAc...) asparagine glycan. The 170-residue stretch at 265–434 folds into the MAM domain; that stretch reads TLLDHCAFEK…ITLTETPCPT (170 aa). Residues 435–596 form the MATH domain; sequence GVWTIRNISQ…DDTLIIFVDF (162 aa). Residues 641 to 668 form a disordered region; sequence LPRRLDQRQPSRPKRSVENTGPMEDHNW. The EGF-like domain maps to 672 to 712; sequence FRDPCDPNPCQNEGTCVNVKGMASCRCVSGHAFFYTGERCQ. 3 disulfide bridges follow: C676–C687, C681–C696, and C698–C711. The chain crosses the membrane as a helical span at residues 720–739; that stretch reads LLGLLIGCITALIFLTFITF. The Cytoplasmic segment spans residues 740-748; sequence SNTYQKLRQ.

Homotetramer consisting of disulfide-linked alpha subunits, homooligomer consisting of disulfide-linked alpha subunit homodimers, or heterotetramer of two alpha and two beta subunits formed by non-covalent association of two disulfide-linked heterodimers. Interacts with MBL2 through its carbohydrate moiety. This interaction may inhibit its catalytic activity. Zn(2+) is required as a cofactor. N-glycosylated; contains GlcNAc, galactose, mannose and a small amount of fucose. In terms of tissue distribution, colocalized with E-24.11 in proximal tubules of juxtamedullary nephrons.

Its subcellular location is the membrane. It carries out the reaction Hydrolysis of protein and peptide substrates preferentially on carboxyl side of hydrophobic residues.. Inhibited by actinonin. The protein is Meprin A subunit alpha (Mep1a) of Rattus norvegicus (Rat).